The chain runs to 1272 residues: AF4/FMR2 family member 2 (1272 aa).

Disordered stretches follow at residues 93–183 and 200–223; these read IPKN…LTQD and PQIGEVEESNPSAKEDSNPKSSGE. The span at 97-107 shows a compositional bias: polar residues; sequence SVPQNPNNKNE. Basic and acidic residues predominate over residues 151-160; the sequence is SKPEWSRDSH. The segment covering 161 to 183 has biased composition (polar residues); the sequence is NPSTVLASQASGQPNKMQTLTQD. Positions 212 to 223 are enriched in basic and acidic residues; that stretch reads AKEDSNPKSSGE. At Ser-391 the chain carries Phosphoserine. Disordered regions lie at residues 418-491, 535-687, 779-829, and 842-903; these read KAKP…KWQL, TNAS…DQEE, SLHA…PEKK, and PPCI…QDKN. The segment covering 426 to 438 has biased composition (pro residues); that stretch reads VNPPLATPQPPPA. Positions 439-452 are enriched in low complexity; the sequence is VQASGGSGSSSESE. A Phosphothreonine modification is found at Thr-478. A compositionally biased stretch (basic and acidic residues) spans 543 to 558; it reads EPKERPLLSLIREKAR. Over residues 576-586 the composition is skewed to polar residues; it reads STTSETVSQRT. The span at 616-629 shows a compositional bias: basic and acidic residues; that stretch reads PKEKESVELHDPPR. Residues 630–640 show a composition bias toward basic residues; sequence GRNKATAHKPA. A compositionally biased stretch (basic and acidic residues) spans 818–829; it reads PTEVAEKIPEKK. 2 stretches are compositionally biased toward pro residues: residues 844-853 and 874-883; these read CISPAPPHKP and FPPPLSPLPE.

The protein belongs to the AF4 family.

The protein localises to the nucleus speckle. In terms of biological role, RNA-binding protein. Might be involved in alternative splicing regulation through an interaction with G-quartet RNA structure. The sequence is that of AF4/FMR2 family member 2 (AFF2) from Pongo pygmaeus (Bornean orangutan).